We begin with the raw amino-acid sequence, 537 residues long: Cryptic loci regulator 2 (537 aa).

The disordered stretch occupies residues 96–116; it reads VSARHVRPNPKSSKDTLEKQP. A compositionally biased stretch (basic and acidic residues) spans 107 to 116; the sequence is SSKDTLEKQP.

As to quaternary structure, interacts with clr3.

The protein resides in the nucleus. Its subcellular location is the chromosome. It localises to the centromere. It is found in the telomere. Required for deacetylation in the mating-type region and the centromere. Acts upstream of the histone deacetylases to promote transcriptional silencing. Required for proper positioning of nucleosomes at heterochromatic loci and for transcriptional gene silencing (TGS) function of the Snf2/Hdac-containing repressor complex (SHREC). The polypeptide is Cryptic loci regulator 2 (clr2) (Schizosaccharomyces pombe (strain 972 / ATCC 24843) (Fission yeast)).